Consider the following 222-residue polypeptide: Protein SHI RELATED SEQUENCE 4 (222 aa).

Cys-72, Cys-75, Cys-83, Cys-88, Cys-92, and Cys-99 together coordinate Zn(2+). A DNA-binding region (zn(2)-C6 fungal-type; degenerate) is located at residues 72–99; sequence CQECGNQAKKGCTHGRCRTCCKSNGLHC. The interval 114–137 is disordered; it reads RERQQQLQTPTSNPTGGSGRVGKY. Polar residues predominate over residues 118 to 128; it reads QQLQTPTSNPT. The Required for homo- and heterodimerization signature appears at 191–194; sequence IAGH.

Belongs to the SHI protein family. Expressed in cotyledon tips, leaf primordia, hydathodes, stipules, and lateral root primordia and weakly at the edges of petals and sepals.

It is found in the nucleus. Its function is as follows. Transcription activator that binds DNA on 5'-ACTCTAC-3' and promotes auxin homeostasis-regulating gene expression (e.g. YUC genes), as well as genes affecting stamen development, cell expansion and timing of flowering. Synergistically with other SHI-related proteins, regulates gynoecium, stamen and leaf development in a dose-dependent manner, controlling apical-basal patterning. Promotes style and stigma formation, and influences vascular development during gynoecium development. May also have a role in the formation and/or maintenance of the shoot apical meristem (SAM). The chain is Protein SHI RELATED SEQUENCE 4 (SRS4) from Arabidopsis thaliana (Mouse-ear cress).